The chain runs to 1452 residues: ABC multidrug transporter A (1452 aa).

A disordered region spans residues 1–20 (MNESHEAGKNSSTNVEEREE). Asn2, Asn10, Asn228, Asn287, and Asn311 each carry an N-linked (GlcNAc...) asparagine glycan. One can recognise an ABC transporter 1 domain in the interval 110-363 (LKTLSLARIA…FLQMGFVCPD (254 aa)). The next 6 membrane-spanning stretches (helical) occupy residues 474-494 (VTISSLFGNTIISLVIASIFY), 508-528 (ALLFFAVLMNALGCGLEMLTL), 554-574 (MIMDLPYKILNAITSNIVLYF), 583-603 (GAFFFFVFTSFILTLTMSMFF), 616-636 (VLPFSAVLLLGLSMYTGFAIP), and 725-745 (IGVIFAYMFLLGAVYLVATDF). The region spanning 802-1044 (FQWKDVCFDI…ILIDYFVRNG (243 aa)) is the ABC transporter 2 domain. 838-845 (GVSGAGKT) is an ATP binding site. 5 helical membrane passes run 1153–1173 (ALCVLSALFVGFSLFHTPNTI), 1183–1203 (IFMLLTLFGQLIQQIMPHFVA), 1223–1243 (FLIANIVVELPWNSLMSVLMF), 1271–1291 (LMIWTFLLFSSTFAHFMIAAF), and 1297–1317 (AGNLGNLLFLLCLLFCGVLAT). 3 N-linked (GlcNAc...) asparagine glycosylation sites follow: Asn1350, Asn1365, and Asn1391. The helical transmembrane segment at 1418–1438 (FGLMWVFIVFNIFAACSLYWW) threads the bilayer.

Belongs to the ABC transporter superfamily. ABCG family. PDR (TC 3.A.1.205) subfamily.

It localises to the membrane. ABC transporter that seems not to be involved in the efflux of toxic substances, at least not the classical compounds such as itraconazole, amphotericin B, voriconazole, posaconazole, ravuconazole, or echinocandins. In Aspergillus fumigatus (Neosartorya fumigata), this protein is ABC multidrug transporter A.